A 287-amino-acid chain; its full sequence is uncharacterized protein (287 aa).

A signal peptide spans 1-20; it reads MKVICGSVFLFSLFFQVVLG. Residues 22–201 lie on the Extracellular side of the membrane; the sequence is YFSSSSGNPN…AFYGPRRNIK (180 aa). N120, N154, and N166 each carry an N-linked (GlcNAc...) asparagine glycan. A helical transmembrane segment spans residues 202 to 222; sequence AAIAVPSVILGLILVALVYYA. The Cytoplasmic segment spans residues 223-287; sequence YRKDTWKIYM…YYQSQVKKFH (65 aa).

It is found in the membrane. This is an uncharacterized protein from Schizosaccharomyces pombe (strain 972 / ATCC 24843) (Fission yeast).